The sequence spans 323 residues: MGNSAARSDFEWVYSDQPHTQRRKEMLAKYPAIKALMRPDPHIKWTVSGMVLVQVLACWLVRGLSWRWLLFWAYAFGGCINHSLTLAIHDISHNTAFGTSCVSRNRWFAIFANLPIGLPYATSFKKYHVDHHRYLGGDGLDVDIPTNFEGWFFCTPARKLLWLVLQPFFYSLRPLCVNPKVVTRMEILNALVQLAFDVTIFALWGIKPIVYLLGSSLLGLGLHPISGHFVAEHYMFLKGHETYSYYGPLNWITFNVGYHMEHHDFPSIPGYYLPLVRKIAPEYYDHLPQHHSWVKVLWDFVFEDSMGPYSRVKRKCKLAKDHL.

Residue G2 is the site of N-myristoyl glycine attachment. Helical transmembrane passes span P41–V61 and W68–I88. The Histidine box-1 signature appears at H89–H93. Residues T95–T99 form a required for C4-hydroxylase activity region. Residues H128 to H132 carry the Histidine box-2 motif. A helical transmembrane segment spans residues V210–A231. Positions H259–H263 match the Histidine box-3 motif.

Belongs to the fatty acid desaturase type 1 family. DEGS subfamily. As to expression, highly expressed in intestinal crypt cells and adjacent epithelial cells (at protein level).

The protein localises to the endoplasmic reticulum membrane. It carries out the reaction a dihydroceramide + 2 Fe(II)-[cytochrome b5] + O2 + 2 H(+) = a phytoceramide + 2 Fe(III)-[cytochrome b5] + H2O. It catalyses the reaction an N-acylsphinganine + 2 Fe(II)-[cytochrome b5] + O2 + 2 H(+) = an N-acylsphing-4-enine + 2 Fe(III)-[cytochrome b5] + 2 H2O. The enzyme catalyses an N-acylsphinganine + 2 Fe(II)-[cytochrome b5] + O2 + 2 H(+) = an N-acyl-(4R)-4-hydroxysphinganine + 2 Fe(III)-[cytochrome b5] + H2O. The catalysed reaction is N-octanoylsphinganine + 2 Fe(II)-[cytochrome b5] + O2 + 2 H(+) = N-octanoyl-4-hydroxysphinganine + 2 Fe(III)-[cytochrome b5] + H2O. It functions in the pathway membrane lipid metabolism; sphingolipid biosynthesis. Its function is as follows. Bifunctional enzyme which acts both as a sphingolipid delta(4)-desaturase and a sphingolipid C4-monooxygenase. This is Sphingolipid delta(4)-desaturase/C4-monooxygenase DES2 from Mus musculus (Mouse).